The sequence spans 299 residues: Phosphoribosylaminoimidazole-succinocarboxamide synthase (299 aa).

The protein belongs to the SAICAR synthetase family.

It catalyses the reaction 5-amino-1-(5-phospho-D-ribosyl)imidazole-4-carboxylate + L-aspartate + ATP = (2S)-2-[5-amino-1-(5-phospho-beta-D-ribosyl)imidazole-4-carboxamido]succinate + ADP + phosphate + 2 H(+). The protein operates within purine metabolism; IMP biosynthesis via de novo pathway; 5-amino-1-(5-phospho-D-ribosyl)imidazole-4-carboxamide from 5-amino-1-(5-phospho-D-ribosyl)imidazole-4-carboxylate: step 1/2. This Streptomyces coelicolor (strain ATCC BAA-471 / A3(2) / M145) protein is Phosphoribosylaminoimidazole-succinocarboxamide synthase.